A 115-amino-acid polypeptide reads, in one-letter code: DNA-binding protein NP_4416A (115 aa).

Residues 1–11 are compositionally biased toward acidic residues; sequence MSGEPTDEDLE. Positions 1 to 46 are disordered; it reads MSGEPTDEDLEELRKKKMEQLKEQGGEGQSEAAEAQRQQAEAQKKA. The segment covering 12–25 has biased composition (basic and acidic residues); sequence ELRKKKMEQLKEQG. Positions 29-41 are enriched in low complexity; it reads QSEAAEAQRQQAE.

It belongs to the PDCD5 family.

This is DNA-binding protein NP_4416A from Natronomonas pharaonis (strain ATCC 35678 / DSM 2160 / CIP 103997 / JCM 8858 / NBRC 14720 / NCIMB 2260 / Gabara) (Halobacterium pharaonis).